We begin with the raw amino-acid sequence, 324 residues long: CYFIP-related Rac1 interactor B (324 aa).

Gly2 is lipidated: N-myristoyl glycine. Lys74 participates in a covalent cross-link: Glycyl lysine isopeptide (Lys-Gly) (interchain with G-Cter in ubiquitin).

The protein belongs to the CYRI family. In terms of assembly, interacts with RAC1 (GTP-bound form preferentially). In terms of processing, ubiquitinated at Lys-74 upon Salmonella bacterial infection. Expressed in pancreatic ducts (at protein level).

The protein localises to the membrane. The protein resides in the mitochondrion. Functionally, negatively regulates RAC1 signaling and RAC1-driven cytoskeletal remodeling. Regulates chemotaxis, cell migration and epithelial polarization by controlling the polarity, plasticity, duration and extent of protrusions. Limits Rac1 mediated activation of the Scar/WAVE complex, focuses protrusion signals and regulates pseudopod complexity by inhibiting Scar/WAVE-induced actin polymerization. Protects against Salmonella bacterial infection. Attenuates processes such as macropinocytosis, phagocytosis and cell migration and restrict sopE-mediated bacterial entry. Also restricts infection mediated by Mycobacterium tuberculosis and Listeria monocytogenes. Involved in the regulation of mitochondrial dynamics and oxidative stress. The sequence is that of CYFIP-related Rac1 interactor B (Cyrib) from Mus musculus (Mouse).